The sequence spans 288 residues: UPF0761 membrane protein HSM_1104 (288 aa).

6 consecutive transmembrane segments (helical) span residues 36–56 (TLALVPLIMVFFSVFAAFPVF), 92–112 (QMSAVGIISLIVVALMLIHSI), 127–147 (PAIFSFAIYWLILTLGPIVIA), 176–196 (LLSLMPFFLTWFIFTVLYMVV), 200–220 (KVSIIHSAAGALIAAVFFTLG), and 240–260 (AMATLPIMLLWIQLSWTAVLL).

It belongs to the UPF0761 family.

It localises to the cell inner membrane. The chain is UPF0761 membrane protein HSM_1104 from Histophilus somni (strain 2336) (Haemophilus somnus).